Reading from the N-terminus, the 399-residue chain is Mitochondrial glycine transporter (399 aa).

3 Solcar repeats span residues Ile-35–Val-137, Leu-164–Asn-251, and Gly-266–Trp-374. 6 helical membrane passes run Leu-41–Gln-66, Gly-112–Ala-138, Leu-170–Glu-195, Gly-226–Lys-249, Val-270–Met-296, and Gly-349–Ile-367. The disordered stretch occupies residues Glu-379–Val-399.

It belongs to the mitochondrial carrier (TC 2.A.29) family. SLC25A38 subfamily.

It is found in the mitochondrion inner membrane. It catalyses the reaction glycine(in) = glycine(out). Mitochondrial glycine transporter that imports glycine into the mitochondrial matrix. Plays an important role in providing glycine for the first enzymatic step in heme biosynthesis, the condensation of glycine with succinyl-CoA to produce 5-aminolevulinate (ALA) in the mitochondrial matrix. The sequence is that of Mitochondrial glycine transporter from Mycosarcoma maydis (Corn smut fungus).